Consider the following 488-residue polypeptide: Aspartyl/glutamyl-tRNA(Asn/Gln) amidotransferase subunit B (488 aa).

The protein belongs to the GatB/GatE family. GatB subfamily. As to quaternary structure, heterotrimer of A, B and C subunits.

It carries out the reaction L-glutamyl-tRNA(Gln) + L-glutamine + ATP + H2O = L-glutaminyl-tRNA(Gln) + L-glutamate + ADP + phosphate + H(+). The enzyme catalyses L-aspartyl-tRNA(Asn) + L-glutamine + ATP + H2O = L-asparaginyl-tRNA(Asn) + L-glutamate + ADP + phosphate + 2 H(+). In terms of biological role, allows the formation of correctly charged Asn-tRNA(Asn) or Gln-tRNA(Gln) through the transamidation of misacylated Asp-tRNA(Asn) or Glu-tRNA(Gln) in organisms which lack either or both of asparaginyl-tRNA or glutaminyl-tRNA synthetases. The reaction takes place in the presence of glutamine and ATP through an activated phospho-Asp-tRNA(Asn) or phospho-Glu-tRNA(Gln). This Ralstonia nicotianae (strain ATCC BAA-1114 / GMI1000) (Ralstonia solanacearum) protein is Aspartyl/glutamyl-tRNA(Asn/Gln) amidotransferase subunit B.